A 439-amino-acid polypeptide reads, in one-letter code: MFNNAIRKTSICVALTLAFSANAMAVTEIPFWHSMEGELGVEVNSLADRFNQSHSDYKIVPVYKGNYEQSLAAGIAAFRSGKAPAILQVYEVGTATMMASKAIKPVFQVFKDANINFDESVFVPTVAGYYTDAKTGHLLSQPFNSSTPVLYYNKDAFKKAGLNPDQPPKTWQELAEDTAKLRAAGSSCGYASGWQGWIQIENFSAWHGQPIASRNNGFDGTDAVLEFNKPLQVKHIQLLSDMNKKGDFTYFGRKDESTAKFYNGDCAITTASSGSLADIRHYAKFNYGVGMMPYDADAKDAPQNAIIGGASLWVMDGKDKDTYKGVAEFLQFLTQPEIAAEWHQKTGYLPITTAAYELTKQQGFYDKNPGADVATRQMLNKPPLPYTKGLRLGNMPQIRTVVDEELEGVWTGKKTPQQALDTAVSRGDVLLHRFEQTNK.

Residues 1–25 (MFNNAIRKTSICVALTLAFSANAMA) form the signal peptide. Sn-glycerol 3-phosphate contacts are provided by Tyr67, Glu91, Ser146, Ser272, Gly309, Tyr348, and Arg399.

The protein belongs to the bacterial solute-binding protein 1 family. The complex is composed of two ATP-binding proteins (UgpC), two transmembrane proteins (UgpA and UgpE) and a solute-binding protein (UgpB).

It is found in the periplasm. Functionally, part of the ABC transporter complex UgpBAEC involved in sn-glycerol-3-phosphate (G3P) import. Binds G3P. The chain is sn-glycerol-3-phosphate-binding periplasmic protein UgpB (ugpB) from Yersinia enterocolitica serotype O:8 / biotype 1B (strain NCTC 13174 / 8081).